Here is a 295-residue protein sequence, read N- to C-terminus: Proline iminopeptidase (295 aa).

The region spanning P29 to E279 is the AB hydrolase-1 domain. The active-site Nucleophile is S107. The active site involves D246. The active-site Proton donor is H273.

Belongs to the peptidase S33 family.

It is found in the cell envelope. The catalysed reaction is Release of N-terminal proline from a peptide.. Releases the N-terminal proline from various substrates. The chain is Proline iminopeptidase from Lactobacillus delbrueckii subsp. bulgaricus (strain ATCC 11842 / DSM 20081 / BCRC 10696 / JCM 1002 / NBRC 13953 / NCIMB 11778 / NCTC 12712 / WDCM 00102 / Lb 14).